Here is a 142-residue protein sequence, read N- to C-terminus: Galactose-6-phosphate isomerase subunit LacA (142 aa).

This sequence belongs to the LacAB/RpiB family. In terms of assembly, heteromultimeric protein consisting of LacA and LacB.

The catalysed reaction is aldehydo-D-galactose 6-phosphate = keto-D-tagatose 6-phosphate. It participates in carbohydrate metabolism; D-galactose 6-phosphate degradation; D-tagatose 6-phosphate from D-galactose 6-phosphate: step 1/1. This Staphylococcus haemolyticus (strain JCSC1435) protein is Galactose-6-phosphate isomerase subunit LacA.